The chain runs to 130 residues: Small ribosomal subunit protein uS9 (130 aa).

It belongs to the universal ribosomal protein uS9 family.

The sequence is that of Small ribosomal subunit protein uS9 from Vibrio vulnificus (strain CMCP6).